Consider the following 354-residue polypeptide: Protein RecA (354 aa).

65-72 (GPESSGKT) contacts ATP.

The protein belongs to the RecA family.

It is found in the cytoplasm. Can catalyze the hydrolysis of ATP in the presence of single-stranded DNA, the ATP-dependent uptake of single-stranded DNA by duplex DNA, and the ATP-dependent hybridization of homologous single-stranded DNAs. It interacts with LexA causing its activation and leading to its autocatalytic cleavage. The polypeptide is Protein RecA (Vibrio cholerae serotype O1 (strain ATCC 39541 / Classical Ogawa 395 / O395)).